The primary structure comprises 102 residues: Small ribosomal subunit protein bS18 (102 aa).

Belongs to the bacterial ribosomal protein bS18 family. As to quaternary structure, part of the 30S ribosomal subunit. Forms a tight heterodimer with protein bS6.

Functionally, binds as a heterodimer with protein bS6 to the central domain of the 16S rRNA, where it helps stabilize the platform of the 30S subunit. The sequence is that of Small ribosomal subunit protein bS18 from Orientia tsutsugamushi (strain Ikeda) (Rickettsia tsutsugamushi).